The primary structure comprises 115 residues: Hydrogenase maturation factor HypA (115 aa).

Ni(2+) is bound at residue H2. Residues C73, C76, C89, and C92 each contribute to the Zn(2+) site.

The protein belongs to the HypA/HybF family.

Functionally, involved in the maturation of [NiFe] hydrogenases. Required for nickel insertion into the metal center of the hydrogenase. In Polaromonas naphthalenivorans (strain CJ2), this protein is Hydrogenase maturation factor HypA.